We begin with the raw amino-acid sequence, 116 residues long: NADPH-dependent 7-cyano-7-deazaguanine reductase (116 aa).

The active-site Thioimide intermediate is the C31. Catalysis depends on D38, which acts as the Proton donor. Residues I53–L55 and Y72–E73 each bind substrate.

It belongs to the GTP cyclohydrolase I family. QueF type 1 subfamily.

The protein localises to the cytoplasm. It carries out the reaction 7-aminomethyl-7-carbaguanine + 2 NADP(+) = 7-cyano-7-deazaguanine + 2 NADPH + 3 H(+). It participates in tRNA modification; tRNA-queuosine biosynthesis. Catalyzes the NADPH-dependent reduction of 7-cyano-7-deazaguanine (preQ0) to 7-aminomethyl-7-deazaguanine (preQ1). The protein is NADPH-dependent 7-cyano-7-deazaguanine reductase of Chlorobaculum parvum (strain DSM 263 / NCIMB 8327) (Chlorobium vibrioforme subsp. thiosulfatophilum).